The following is a 105-amino-acid chain: Large ribosomal subunit protein uL24 (105 aa).

Belongs to the universal ribosomal protein uL24 family. Part of the 50S ribosomal subunit.

Functionally, one of two assembly initiator proteins, it binds directly to the 5'-end of the 23S rRNA, where it nucleates assembly of the 50S subunit. Its function is as follows. One of the proteins that surrounds the polypeptide exit tunnel on the outside of the subunit. This Methylobacillus flagellatus (strain ATCC 51484 / DSM 6875 / VKM B-1610 / KT) protein is Large ribosomal subunit protein uL24.